We begin with the raw amino-acid sequence, 743 residues long: Putative metallophosphoesterase At3g03305 (743 aa).

The N-terminal stretch at 1–40 is a signal peptide; that stretch reads MESIGDDDELRSKTVSLPRRISFTILLLLLLISLSTRVSG. 3 residues coordinate a divalent metal cation: Asp66, His68, and Asp101. Transmembrane regions (helical) follow at residues 514-534, 565-585, 623-643, 687-704, and 716-736; these read ILWP…CIII, MPVV…FPWF, VMVV…LVVC, LFRK…WKHF, and MNVV…LYVI.

Belongs to the metallophosphoesterase superfamily. It depends on a divalent metal cation as a cofactor.

It is found in the membrane. The protein is Putative metallophosphoesterase At3g03305 of Arabidopsis thaliana (Mouse-ear cress).